The following is a 200-amino-acid chain: Holliday junction resolvase RecU (200 aa).

Residues 1–27 (MALKYPSGKEYRGNKPNAARRPAADYA) are disordered. Mg(2+) contacts are provided by T84, D86, E99, and Q118.

The protein belongs to the RecU family. As to quaternary structure, homodimer. Mg(2+) is required as a cofactor.

The protein resides in the cytoplasm. It catalyses the reaction Endonucleolytic cleavage at a junction such as a reciprocal single-stranded crossover between two homologous DNA duplexes (Holliday junction).. Its function is as follows. Endonuclease that resolves Holliday junction intermediates in genetic recombination. Cleaves mobile four-strand junctions by introducing symmetrical nicks in paired strands. Promotes annealing of linear ssDNA with homologous dsDNA. Required for DNA repair, homologous recombination and chromosome segregation. This Geobacillus kaustophilus (strain HTA426) protein is Holliday junction resolvase RecU.